The primary structure comprises 371 residues: MGIIFYTTQMPNFEQNQVIAVGLSGGVDSSVAALVLKEKGYEVIGLFMQNWETDSKDPFCTAEQDLSDAKAIADHIGIPLYVVNFSKAYWNHVFQHCLDEFAQGRTPNPDVWCNREIKFKSLLDHAKKLGATHLATGHYACIQNENNEYRLLKSNDSHKDQSYFLHLLNQYQLANSVFPIGGYQKSEVRAIAKKRGFINHAKKDSTGICFIGERKFKDFLNEFLLAQPGNIETSEGKIIGKHDGIMFYTVGQRKGLHIGGRPDAGEAPWYVVDKDVKRNVLIVVQGYEHPLLYSQELTCTNLHWIRDTEPSFPLTCKAKTRCRQADQTCVVTRLDNDHCHVQFEHPQRAITRGQSVVFYLGNECLGGGIIN.

Residues 22 to 29 (GLSGGVDS) and methionine 48 contribute to the ATP site. Residues 108-110 (NPD) are interaction with target base in tRNA. The active-site Nucleophile is the cysteine 113. A disulfide bridge connects residues cysteine 113 and cysteine 209. Glycine 137 lines the ATP pocket. The interval 159-161 (KDQ) is interaction with tRNA. Cysteine 209 (cysteine persulfide intermediate) is an active-site residue.

Belongs to the MnmA/TRMU family.

The protein localises to the cytoplasm. The catalysed reaction is S-sulfanyl-L-cysteinyl-[protein] + uridine(34) in tRNA + AH2 + ATP = 2-thiouridine(34) in tRNA + L-cysteinyl-[protein] + A + AMP + diphosphate + H(+). Its function is as follows. Catalyzes the 2-thiolation of uridine at the wobble position (U34) of tRNA, leading to the formation of s(2)U34. This chain is tRNA-specific 2-thiouridylase MnmA, found in Coxiella burnetii (strain CbuG_Q212) (Coxiella burnetii (strain Q212)).